A 315-amino-acid polypeptide reads, in one-letter code: Replication factor C small subunit (315 aa).

An ATP-binding site is contributed by glycine 43–threonine 50.

Belongs to the activator 1 small subunits family. RfcS subfamily. As to quaternary structure, heteromultimer composed of small subunits (RfcS) and large subunits (RfcL).

Its function is as follows. Part of the RFC clamp loader complex which loads the PCNA sliding clamp onto DNA. In Methanococcus maripaludis (strain C7 / ATCC BAA-1331), this protein is Replication factor C small subunit.